Reading from the N-terminus, the 182-residue chain is Oligoribonuclease (182 aa).

Residues 8-171 enclose the Exonuclease domain; it reads LIWIDLEMTG…DDIRESIKEL (164 aa). Tyrosine 129 is an active-site residue.

The protein belongs to the oligoribonuclease family.

It localises to the cytoplasm. In terms of biological role, 3'-to-5' exoribonuclease specific for small oligoribonucleotides. The protein is Oligoribonuclease of Actinobacillus succinogenes (strain ATCC 55618 / DSM 22257 / CCUG 43843 / 130Z).